The primary structure comprises 532 residues: Aspartate--tRNA ligase 1, cytoplasmic (532 aa).

A coiled-coil region spans residues 7–41; that stretch reads LEECGEKISKKESKKRAAKLEKLLRKQEREEATSS. The tract at residues 31–58 is disordered; sequence RKQEREEATSSSLSLEEEDESCSSNYGD. A DNA-binding region (OB) is located at residues 88-169; sequence VSIRGRLHKN…QVEIHVRKMY (82 aa). Glu260 lines the L-aspartate pocket. The segment at 282–285 is aspartate; that stretch reads QLHK. Arg304 contributes to the L-aspartate binding site. ATP is bound by residues 304–306, 312–314, and Glu455; these read RAE and RHL. Mg(2+)-binding residues include Glu455 and Ser458. L-aspartate contacts are provided by Ser458 and Arg462. 503–506 lines the ATP pocket; the sequence is GLER.

It belongs to the class-II aminoacyl-tRNA synthetase family. Type 2 subfamily.

The protein localises to the cytoplasm. It is found in the cytosol. The enzyme catalyses tRNA(Asp) + L-aspartate + ATP = L-aspartyl-tRNA(Asp) + AMP + diphosphate. In terms of biological role, catalyzes the specific attachment of an amino acid to its cognate tRNA in a 2 step reaction: the amino acid (AA) is first activated by ATP to form AA-AMP and then transferred to the acceptor end of the tRNA. The sequence is that of Aspartate--tRNA ligase 1, cytoplasmic from Arabidopsis thaliana (Mouse-ear cress).